We begin with the raw amino-acid sequence, 403 residues long: Acetylornithine aminotransferase (403 aa).

Pyridoxal 5'-phosphate-binding positions include 107–108 (GA) and phenylalanine 140. Arginine 143 serves as a coordination point for N(2)-acetyl-L-ornithine. Pyridoxal 5'-phosphate is bound at residue 225 to 228 (DEVQ). Lysine 254 bears the N6-(pyridoxal phosphate)lysine mark. Serine 282 is a binding site for N(2)-acetyl-L-ornithine. Position 283 (threonine 283) interacts with pyridoxal 5'-phosphate.

Belongs to the class-III pyridoxal-phosphate-dependent aminotransferase family. ArgD subfamily. In terms of assembly, homodimer. Pyridoxal 5'-phosphate serves as cofactor.

The protein resides in the cytoplasm. The catalysed reaction is N(2)-acetyl-L-ornithine + 2-oxoglutarate = N-acetyl-L-glutamate 5-semialdehyde + L-glutamate. The protein operates within amino-acid biosynthesis; L-arginine biosynthesis; N(2)-acetyl-L-ornithine from L-glutamate: step 4/4. In Vibrio cholerae serotype O1 (strain ATCC 39315 / El Tor Inaba N16961), this protein is Acetylornithine aminotransferase.